A 2162-amino-acid chain; its full sequence is Polyketide synthase 1 (2162 aa).

The segment at Phe19–His264 is N-terminal acylcarrier protein transacylase domain (SAT). In terms of domain architecture, Ketosynthase family 3 (KS3) spans Asp397–Asp841. Residues Cys578, His713, and His757 each act as for beta-ketoacyl synthase activity in the active site. A malonyl-CoA:ACP transacylase (MAT) domain region spans residues Ala941–Trp1245. Ser1030 functions as the For acyl/malonyl transferase activity in the catalytic mechanism. The tract at residues Thr1322–Ala1636 is product template (PT) domain. The tract at residues His1326 to Ala1459 is N-terminal hotdog fold. Positions His1326–Asp1631 constitute a PKS/mFAS DH domain. The Proton acceptor; for dehydratase activity role is filled by His1358. The tract at residues Leu1486–Asp1631 is C-terminal hotdog fold. The active-site Proton donor; for dehydratase activity is Asp1545. Positions Ala1633–Gln1669 are disordered. A compositionally biased stretch (low complexity) spans Pro1658–Gln1669. Residues Ile1692–Thr1766 enclose the Carrier 1 domain. The residue at position 1726 (Ser1726) is an O-(pantetheine 4'-phosphoryl)serine. A compositionally biased stretch (low complexity) spans Ser1772 to Ser1783. The interval Ser1772–Ser1809 is disordered. Polar residues predominate over residues Ser1794–Ser1809. The 78-residue stretch at Ser1807–Ile1884 folds into the Carrier 2 domain. Ser1844 is modified (O-(pantetheine 4'-phosphoryl)serine). The interval Leu1896–Ala2160 is thioesterase (TE) domain. Ser1987 functions as the For thioesterase activity in the catalytic mechanism.

Its function is as follows. Polyketide synthase; part of the Pks1 gene cluster that mediates the biosynthesis of an anthraquinone derivative pigment that contributes to conidial pigmentation that provides protection from UV radiation, heat and cold stress. The polyketide synthase Pks1 produces 1-acetyl-2,4,6,8-tetrahydroxy-9,10-anthraquinone though condensation of acetyl-CoA with malonyl-CoA. The dehydratase EthD and the laccase Mlac1 further convert the anthraquinone derivative into the final conidial pigment. This Metarhizium album (strain ARSEF 1941) protein is Polyketide synthase 1.